The following is a 123-amino-acid chain: Large ribosomal subunit protein bL17 (123 aa).

The protein belongs to the bacterial ribosomal protein bL17 family. As to quaternary structure, part of the 50S ribosomal subunit. Contacts protein L32.

The chain is Large ribosomal subunit protein bL17 from Borreliella afzelii (strain PKo) (Borrelia afzelii).